A 499-amino-acid polypeptide reads, in one-letter code: Cysteine--tRNA ligase (499 aa).

Cysteine 29 contacts Zn(2+). The 'HIGH' region signature appears at 31-41 (VTVYDLCHLGH). Zn(2+) is bound by residues cysteine 213, histidine 238, and glutamate 242. The 'KMSKS' region signature appears at 270–274 (KMSKS). ATP is bound at residue lysine 273.

Belongs to the class-I aminoacyl-tRNA synthetase family. Monomer. Zn(2+) serves as cofactor.

Its subcellular location is the cytoplasm. The enzyme catalyses tRNA(Cys) + L-cysteine + ATP = L-cysteinyl-tRNA(Cys) + AMP + diphosphate. This Synechococcus sp. (strain CC9902) protein is Cysteine--tRNA ligase.